The chain runs to 198 residues: Holliday junction branch migration complex subunit RuvA (198 aa).

The interval 1–63 is domain I; the sequence is MYDYIKGQLT…EDAHLLFGFH (63 aa). The domain II stretch occupies residues 64–142; it reads TEDEKDVFLK…EAPQETGHTK (79 aa). The tract at residues 143 to 147 is flexible linker; the sequence is ARSNK. The domain III stretch occupies residues 148-198; that stretch reads AGNTQLDEAIEALLALGYKATELKKIRAFFEGTSETAEQYIKSALKLLMKG.

This sequence belongs to the RuvA family. In terms of assembly, homotetramer. Forms an RuvA(8)-RuvB(12)-Holliday junction (HJ) complex. HJ DNA is sandwiched between 2 RuvA tetramers; dsDNA enters through RuvA and exits via RuvB. An RuvB hexamer assembles on each DNA strand where it exits the tetramer. Each RuvB hexamer is contacted by two RuvA subunits (via domain III) on 2 adjacent RuvB subunits; this complex drives branch migration. In the full resolvosome a probable DNA-RuvA(4)-RuvB(12)-RuvC(2) complex forms which resolves the HJ.

The protein resides in the cytoplasm. Its function is as follows. The RuvA-RuvB-RuvC complex processes Holliday junction (HJ) DNA during genetic recombination and DNA repair, while the RuvA-RuvB complex plays an important role in the rescue of blocked DNA replication forks via replication fork reversal (RFR). RuvA specifically binds to HJ cruciform DNA, conferring on it an open structure. The RuvB hexamer acts as an ATP-dependent pump, pulling dsDNA into and through the RuvAB complex. HJ branch migration allows RuvC to scan DNA until it finds its consensus sequence, where it cleaves and resolves the cruciform DNA. The chain is Holliday junction branch migration complex subunit RuvA from Streptococcus pyogenes serotype M6 (strain ATCC BAA-946 / MGAS10394).